Reading from the N-terminus, the 195-residue chain is Phosphoribosylglycinamide formyltransferase (195 aa).

A N(1)-(5-phospho-beta-D-ribosyl)glycinamide-binding site is contributed by 12-14; the sequence is GSN. (6R)-10-formyltetrahydrofolate is bound by residues Lys-65, 90 to 93, and Asn-107; that span reads MRLI. His-109 serves as the catalytic Proton donor.

The protein belongs to the GART family.

The catalysed reaction is N(1)-(5-phospho-beta-D-ribosyl)glycinamide + (6R)-10-formyltetrahydrofolate = N(2)-formyl-N(1)-(5-phospho-beta-D-ribosyl)glycinamide + (6S)-5,6,7,8-tetrahydrofolate + H(+). The protein operates within purine metabolism; IMP biosynthesis via de novo pathway; N(2)-formyl-N(1)-(5-phospho-D-ribosyl)glycinamide from N(1)-(5-phospho-D-ribosyl)glycinamide (10-formyl THF route): step 1/1. Catalyzes the transfer of a formyl group from 10-formyltetrahydrofolate to 5-phospho-ribosyl-glycinamide (GAR), producing 5-phospho-ribosyl-N-formylglycinamide (FGAR) and tetrahydrofolate. The protein is Phosphoribosylglycinamide formyltransferase of Bacillus subtilis (strain 168).